The chain runs to 487 residues: Protein DETOXIFICATION 10 (487 aa).

12 helical membrane-spanning segments follow: residues 35 to 55 (LICF…IQII), 73 to 93 (FAVS…SCAL), 122 to 142 (LVCL…VILG), 155 to 175 (AAWL…IRYF), 184 to 204 (LLVT…LLVY), 211 to 231 (IGGA…LGSF), 264 to 284 (AAML…SGLL), 293 to 313 (VLSI…AIAA), 333 to 353 (IVVY…SMSL), 377 to 397 (MAPL…LSGV), 412 to 432 (FGAF…WVHL), and 435 to 455 (VGLW…LALV).

The protein belongs to the multi antimicrobial extrusion (MATE) (TC 2.A.66.1) family.

It is found in the membrane. In Arabidopsis thaliana (Mouse-ear cress), this protein is Protein DETOXIFICATION 10.